The chain runs to 570 residues: Laccase-3 (570 aa).

The first 25 residues, 1 to 25 (MESFRRFSLLSFIALLAYFAFLASA), serve as a signal peptide directing secretion. Plastocyanin-like domains are found at residues 33-149 (VITP…PRLG) and 159-310 (RDIP…YVNA). Asn-79 carries an N-linked (GlcNAc...) asparagine glycan. The Cu cation site is built by His-83, His-85, His-128, and His-130. N-linked (GlcNAc...) asparagine glycans are attached at residues Asn-188, Asn-298, Asn-332, Asn-383, Asn-393, and Asn-433. The Plastocyanin-like 3 domain maps to 419-554 (DFPPVPPVQF…AMVFLVENGR (136 aa)). Cu cation contacts are provided by His-471, His-474, His-476, His-533, Cys-534, His-535, and His-539.

This sequence belongs to the multicopper oxidase family. Cu cation is required as a cofactor. As to expression, mostly expressed in roots and siliques.

The protein resides in the secreted. Its subcellular location is the extracellular space. It is found in the apoplast. It catalyses the reaction 4 hydroquinone + O2 = 4 benzosemiquinone + 2 H2O. Lignin degradation and detoxification of lignin-derived products. The sequence is that of Laccase-3 (LAC3) from Arabidopsis thaliana (Mouse-ear cress).